The following is a 257-amino-acid chain: Type I iodothyronine deiodinase (257 aa).

Residues 1–12 (MGLPGLGLLLKR) lie on the Extracellular side of the membrane. The helical; Signal-anchor for type III membrane protein transmembrane segment at 13–33 (FGVLVRVALKVAVGKVLLTLW) threads the bilayer. The Cytoplasmic portion of the chain corresponds to 34 to 257 (PSAIRPHLLA…CRSSAQSPRL (224 aa)). Residue Sec-126 is part of the active site. Sec-126 is a non-standard amino acid (selenocysteine).

It belongs to the iodothyronine deiodinase family. As to quaternary structure, predominantly monomer. Can form homodimers but homodimerization is not essential for enzyme activity. As to expression, liver specific.

The protein resides in the cell membrane. Its subcellular location is the endoplasmic reticulum membrane. It localises to the basolateral cell membrane. It carries out the reaction 3,3',5-triiodo-L-thyronine + iodide + A + H(+) = L-thyroxine + AH2. The catalysed reaction is 3,3',5'-triiodo-L-thyronine + iodide + A + H(+) = L-thyroxine + AH2. It catalyses the reaction 3,3'-diiodo-L-thyronine + iodide + A + H(+) = 3,3',5'-triiodo-L-thyronine + AH2. The enzyme catalyses 3,3'-diiodo-L-thyronine + iodide + A + H(+) = 3,3',5-triiodo-L-thyronine + AH2. It carries out the reaction 3'-iodo-L-thyronine + iodide + A + H(+) = 3',5'-diiodo-L-thyronine + AH2. The catalysed reaction is 3-iodo-L-thyronine + iodide + A + H(+) = 3,5-diiodo-L-thyronine + AH2. It catalyses the reaction 3-iodo-L-thyronine + iodide + A + H(+) = 3,3'-diiodo-L-thyronine + AH2. The enzyme catalyses 3,3'-diiodothyronamine + iodide + A + H(+) = 3,3',5'-triiodothyronamine + AH2. It carries out the reaction 3'-iodothyronamine + iodide + A + H(+) = 3',5'-diiodothyronamine + AH2. The catalysed reaction is 3-iodothyronamine + iodide + A + H(+) = 3,3'-diiodothyronamine + AH2. It catalyses the reaction 3,3'-diiodothyronamine + iodide + A + H(+) = 3,3',5-triiodothyronamine + AH2. The enzyme catalyses 3-iodothyronamine + iodide + A + H(+) = 3,5-diiodothyronamine + AH2. It carries out the reaction 3,3'-diiodo-L-thyronine sulfate + iodide + A + H(+) = 3,3',5'-triiodo-L-thyronine sulfate + AH2. The catalysed reaction is 3,3',5'-triiodo-L-thyronine sulfate + iodide + A + H(+) = L-thyroxine sulfate + AH2. It catalyses the reaction 3,3'-diiodo-L-thyronine sulfate + iodide + A + H(+) = 3,3',5-triiodo-L-thyronine sulfate + AH2. Its function is as follows. Plays a crucial role in the metabolism of thyroid hormones (TH) and has specific roles in TH activation and inactivation by deiodination. Catalyzes the deiodination of L-thyroxine (T4) to 3,5,3'-triiodothyronine (T3) and 3',5'-diiodothyronine (3',5'-T2) to 3'-monoiodothyronine (3'-T1) via outer-ring deiodination (ORD). Catalyzes the deiodination of T4 to 3,3',5'-triiodothyronine (rT3), T3 to 3,3'-diiodothyronine (3,3'-T2), 3,5-diiodothyronine (3,5-T2) to 3-monoiodothyronine (3-T1) and 3,3'-T2 to 3-T1 via inner-ring deiodination (IRD). Catalyzes the deiodination of rT3 to 3,3'-T2 via ORD. Catalyzes the phenolic ring deiodinations of 3,3',5'-triiodothyronamine, 3',5'-diiodothyronamine and 3,3'-diiodothyronamine as well as tyrosyl ring deiodinations of 3,5,3'-triiodothyronamine and 3,5-diiodothyronamine. Catalyzes the deiodination of L-thyroxine sulfate and 3,3',5-triiodo-L-thyronine sulfate via IRD and of 3,3',5'-triiodo-L-thyronine sulfate via ORD. The polypeptide is Type I iodothyronine deiodinase (DIO1) (Suncus murinus (Asian house shrew)).